Reading from the N-terminus, the 852-residue chain is Probable nitrite reductase-hydroxylamine oxidoreductase fusion protein (852 aa).

A signal peptide spans methionine 1–alanine 27. The nitrite reductase domain stretch occupies residues aspartate 28–proline 327. Plastocyanin-like domains lie at valine 72–proline 169 and glycine 217–glycine 307. Positions 102 and 145 each coordinate Cu cation. The hydroxylamine oxidoreductase domain stretch occupies residues glycine 328–glycine 827. Heme is bound by residues cysteine 406, cysteine 409, histidine 410, histidine 426, cysteine 463, cysteine 466, histidine 467, histidine 471, cysteine 483, cysteine 486, histidine 487, histidine 505, histidine 537, cysteine 543, cysteine 546, histidine 547, histidine 550, cysteine 563, cysteine 566, histidine 567, cysteine 614, cysteine 617, histidine 618, cysteine 686, cysteine 689, histidine 690, and histidine 813.

It in the N-terminal section; belongs to the multicopper oxidase family. The cofactor is Cu cation. It depends on heme as a cofactor.

It is found in the encapsulin nanocompartment. It catalyses the reaction hydroxylamine + 4 Fe(III)-[cytochrome c] + H2O = 4 Fe(II)-[cytochrome c] + nitrite + 5 H(+). It carries out the reaction nitric oxide + Fe(III)-[cytochrome c] + H2O = Fe(II)-[cytochrome c] + nitrite + 2 H(+). A nitrite reductase-hydroxylamine oxidoreductase protein that probably functions in the type 1 encapsulin nanocompartment. Probably involved in reductive catalysis. Targeted to the encapsulin nanocompartment by association with the diheme domain of the encapsulin shell protein (AC Q1Q6L7). Catalyzes the reduction of nitrite to nitric oxide (NO). Catalyzes the oxidation of hydroxylamine to nitrite. This is Probable nitrite reductase-hydroxylamine oxidoreductase fusion protein from Kuenenia stuttgartiensis.